Here is a 631-residue protein sequence, read N- to C-terminus: Phosphomethylpyrimidine synthase (631 aa).

Substrate is bound by residues N239, M268, Y297, H333, 353 to 355 (SRG), 394 to 397 (DGLR), and E433. H437 provides a ligand contact to Zn(2+). Y460 is a substrate binding site. H501 contacts Zn(2+). The [4Fe-4S] cluster site is built by C581, C584, and C589.

Belongs to the ThiC family. Homodimer. It depends on [4Fe-4S] cluster as a cofactor.

It catalyses the reaction 5-amino-1-(5-phospho-beta-D-ribosyl)imidazole + S-adenosyl-L-methionine = 4-amino-2-methyl-5-(phosphooxymethyl)pyrimidine + CO + 5'-deoxyadenosine + formate + L-methionine + 3 H(+). It participates in cofactor biosynthesis; thiamine diphosphate biosynthesis. In terms of biological role, catalyzes the synthesis of the hydroxymethylpyrimidine phosphate (HMP-P) moiety of thiamine from aminoimidazole ribotide (AIR) in a radical S-adenosyl-L-methionine (SAM)-dependent reaction. This Salmonella gallinarum (strain 287/91 / NCTC 13346) protein is Phosphomethylpyrimidine synthase.